The primary structure comprises 357 residues: Membrane-bound lytic murein transglycosylase C (357 aa).

An N-terminal signal peptide occupies residues 1–15; that stretch reads MKKYLLLALLPFLYA. C16 carries the N-palmitoyl cysteine lipid modification. C16 is lipidated: S-diacylglycerol cysteine.

Belongs to the transglycosylase Slt family.

It is found in the cell outer membrane. It catalyses the reaction Exolytic cleavage of the (1-&gt;4)-beta-glycosidic linkage between N-acetylmuramic acid (MurNAc) and N-acetylglucosamine (GlcNAc) residues in peptidoglycan, from either the reducing or the non-reducing ends of the peptidoglycan chains, with concomitant formation of a 1,6-anhydrobond in the MurNAc residue.. Functionally, murein-degrading enzyme. May play a role in recycling of muropeptides during cell elongation and/or cell division. This Haemophilus influenzae (strain 86-028NP) protein is Membrane-bound lytic murein transglycosylase C.